Reading from the N-terminus, the 1070-residue chain is DNA-directed RNA polymerase subunit beta (1070 aa).

The protein belongs to the RNA polymerase beta chain family. In plastids the minimal PEP RNA polymerase catalytic core is composed of four subunits: alpha, beta, beta', and beta''. When a (nuclear-encoded) sigma factor is associated with the core the holoenzyme is formed, which can initiate transcription.

It localises to the plastid. Its subcellular location is the chloroplast. It catalyses the reaction RNA(n) + a ribonucleoside 5'-triphosphate = RNA(n+1) + diphosphate. Functionally, DNA-dependent RNA polymerase catalyzes the transcription of DNA into RNA using the four ribonucleoside triphosphates as substrates. This is DNA-directed RNA polymerase subunit beta from Phalaenopsis aphrodite subsp. formosana (Moth orchid).